The primary structure comprises 229 residues: MVSFKYLFLAASALGALAAPVEVEESSWFNETALHEFAERAGTPSSTGWNNGYYYSFWTDNGGTVNYQNGNGGSYSVQWKDTGNFVGGKGWNPGSARTINYSGSFNPSGNAYLTVYGWTTNPLVEYYIVENYGTYNPGNGGTYRGSVYSDGANYNIYTATRYNAPSIEGDKTFTQYWSVRQSKRTGGTVTTANHFNAWAQLGMSLGTHNYQIVATEGYQSSGSSSITVY.

Positions 1-18 (MVSFKYLFLAASALGALA) are cleaved as a signal peptide. N-linked (GlcNAc...) asparagine glycans are attached at residues N30 and N100. The GH11 domain occupies 41-229 (AGTPSSTGWN…SSGSSSITVY (189 aa)). E125 (nucleophile) is an active-site residue. The active-site Proton donor is the E216.

The protein belongs to the glycosyl hydrolase 11 (cellulase G) family.

It is found in the secreted. It carries out the reaction Endohydrolysis of (1-&gt;4)-beta-D-xylosidic linkages in xylans.. It participates in glycan degradation; xylan degradation. Its function is as follows. Endo-1,4-beta-xylanase involved in the hydrolysis of xylan, a major structural heterogeneous polysaccharide found in plant biomass representing the second most abundant polysaccharide in the biosphere, after cellulose. This is Probable endo-1,4-beta-xylanase A (xlnA) from Aspergillus clavatus (strain ATCC 1007 / CBS 513.65 / DSM 816 / NCTC 3887 / NRRL 1 / QM 1276 / 107).